The primary structure comprises 90 residues: DNA-binding protein HU-beta (90 aa).

It belongs to the bacterial histone-like protein family. Heterodimer of an alpha and a beta chain.

Histone-like DNA-binding protein which is capable of wrapping DNA to stabilize it, and thus to prevent its denaturation under extreme environmental conditions. This Escherichia coli O6:H1 (strain CFT073 / ATCC 700928 / UPEC) protein is DNA-binding protein HU-beta (hupB).